The sequence spans 1033 residues: Tyrosine-protein kinase-like otk (1033 aa).

Positions 1–22 (MTARMISICGLVMALMMASVLA) are cleaved as a signal peptide. The Extracellular portion of the chain corresponds to 23-581 (SSSRFQRVPQ…GGDGFLVTRA (559 aa)). Ig-like C2-type domains follow at residues 25–114 (SRFQ…AKLS), 113–199 (LSVI…RVMS), 251–365 (PEDL…APIN), 368–463 (PGIL…VAIN), and 468–558 (PKFS…VQLV). N-linked (GlcNAc...) asparagine glycosylation is present at asparagine 39. 4 cysteine pairs are disulfide-bonded: cysteine 46-cysteine 95, cysteine 137-cysteine 188, cysteine 276-cysteine 354, and cysteine 399-cysteine 447. N-linked (GlcNAc...) asparagine glycans are attached at residues asparagine 336, asparagine 417, asparagine 429, asparagine 444, asparagine 457, asparagine 512, and asparagine 524. Cysteines 490 and 542 form a disulfide. A helical membrane pass occupies residues 582-602 (VLITMTVALAYIVLVVGLMLW). The Cytoplasmic portion of the chain corresponds to 603–1033 (CRYRRQARKA…LSKAMQSAEK (431 aa)). Disordered stretches follow at residues 617-679 (LSTK…KKSA) and 718-760 (SPSD…KTSM). Residues 655 to 673 (KSSGDAQKSDDTACSQQSR) are compositionally biased toward polar residues. Serine 678 carries the post-translational modification Phosphoserine. One can recognise a Protein kinase; inactive domain in the interval 692-1028 (LSELIQIGRG…QLGAALSKAM (337 aa)). Over residues 720 to 731 (SDKDADTEKQHS) the composition is skewed to basic and acidic residues.

Belongs to the protein kinase superfamily. Tyr protein kinase family. Insulin receptor subfamily. In terms of assembly, interacts with plexA; component of a receptor complex that mediates the repulsive signaling in response to Semaphorin ligands. As to expression, dynamically expressed during embryogenesis in several areas of the developing nervous system, including neurons and fasciculating axons. Expression in stage 7 embryos is seen in the anterior midgut primordia, cephalic furrow and along the germinal band. At stage 11, expression is in 15 stripes over the trunk region, and in the anterior and posterior midgut primordia. Stage 12 shows expression in the developing nervous system, procephalic lobe and maxillar bud. Stage 13 shows expression in the ventral cord, maxillar segment and in three regions of the gut. At stage 16 expression is preferentially detected throughout the nervous system, including the neuromers in the ventral cord and the supraesophageal ganglion (at protein level). In larva, expression is seen in developing R cells and is localized predominantly to R1-R6 growth cones.

It is found in the cell membrane. In terms of biological role, acts as a calcium-dependent, homophilic cell adhesion molecule that regulates neural recognition during the development of the nervous system. Component of the repulsive Plexin signaling response to regulate motor axon guidance at the embryonic stage. Also component of a receptor complex that is required in the adult visual system to innervate the lamina layer; specific targeting of R1-R6 axons. This is Tyrosine-protein kinase-like otk from Drosophila melanogaster (Fruit fly).